The primary structure comprises 415 residues: Membrane-bound ghrelin O-acyltransferase mboat4 (415 aa).

The Lumenal segment spans residues 1 to 6 (MIDLLW). A helical transmembrane segment spans residues 7-28 (ISSDGHPQLFYQFINIPFAFLF). Residues 29-42 (HCLSSQGHLSIINR) lie on the Cytoplasmic side of the membrane. A helical membrane pass occupies residues 43 to 58 (YVYLAMGGFMLAIATM). At 59 to 61 (GPY) the chain is on the lumenal side. Residues 62–78 (SSLLFLSAIKLLLLIHY) traverse the membrane as a helical segment. The Cytoplasmic portion of the chain corresponds to 79 to 84 (IHPMHL). Residues 85 to 103 (HRWILGLQMCWQTCWHLYV) form a helical membrane-spanning segment. Topologically, residues 104–122 (QYQIYWLQEAPDSRLLLAI) are lumenal. Residues 123–138 (SALMLMTQRISSLSLD) traverse the membrane as a helical segment. At 139 to 193 (FQEGTISNQSILIPFLTYSLYFPALLGGPLCSFNAFVQSVERQHTSMTSYLGNLT) the chain is on the cytoplasmic side. The chain crosses the membrane as a helical span at residues 194-214 (SKISQVIVLVWIKQLFSELLK). Over 215-227 (SATFNIDSVCLDV) the chain is Lumenal. Residues 228–247 (LWIWIFSLTLRLNYYAHWKM) form a helical membrane-spanning segment. The Cytoplasmic segment spans residues 248-312 (SECVNNAAGL…RKIVFNRTSR (65 aa)). Active-site residues include asparagine 295 and histidine 326. Residues 313–326 (SPLFMTFGFSALWH) traverse the membrane as a helical segment. The Lumenal portion of the chain corresponds to 327–328 (GL). The helical transmembrane segment at 329-345 (HPGQILGFLIWAVTVQA) threads the bilayer. At 346–364 (DYKLHRFSHPKLNSLWRKR) the chain is on the cytoplasmic side. Residues 365–385 (LYVCVNWAFTQLTVACVVVCV) traverse the membrane as a helical segment. Over 386–394 (ELQSLASVK) the chain is Lumenal. The chain crosses the membrane as a helical span at residues 395–415 (LLWSSCIAVFPLLSALILIIL).

This sequence belongs to the membrane-bound acyltransferase family. In terms of assembly, monomer. Not glycosylated.

It is found in the endoplasmic reticulum membrane. It catalyses the reaction octanoyl-CoA + L-seryl-[protein] = O-octanoyl-L-seryl-[protein] + CoA. The catalysed reaction is decanoyl-CoA + L-seryl-[protein] = O-decanoyl-L-seryl-[protein] + CoA. The enzyme catalyses L-seryl-[protein] + acetyl-CoA = O-acetyl-L-seryl-[protein] + CoA. It carries out the reaction L-seryl-[protein] + butanoyl-CoA = O-butanoyl-L-seryl-[protein] + CoA. It catalyses the reaction pentanoyl-CoA + L-seryl-[protein] = O-pentanoyl-L-seryl-[protein] + CoA. The catalysed reaction is hexanoyl-CoA + L-seryl-[protein] = O-hexanoyl-L-seryl-[protein] + CoA. The enzyme catalyses heptanoyl-CoA + L-seryl-[protein] = O-heptanoyl-L-seryl-[protein] + CoA. It carries out the reaction nonanoyl-CoA + L-seryl-[protein] = O-nonanoyl-L-seryl-[protein] + CoA. It catalyses the reaction L-seryl-[protein] + dodecanoyl-CoA = O-dodecanoyl-L-seryl-[protein] + CoA. The catalysed reaction is L-seryl-[protein] + tetradecanoyl-CoA = O-tetradecanoyl-L-seryl-[protein] + CoA. The enzyme catalyses a fatty acyl-CoA + L-seryl-[protein] = O-fatty acyl-L-seryl-[protein] + CoA. Functionally, catalyzes ghrelin acylation at 'Ser-3' using preferentially octanoyl-CoA, hexanoyl-CoA and decanoyl-CoA as acyl-CoA donors leading to ghrelin activity. In vitro uses also acyl-CoA donors of different lengths from short-chain (C2) to long-chain fatty acids (C16) knowing that acyl-CoA donors from butanoyl-CoA (C4) to dodecanoyl-CoA (C12) are more efficient compared to longer acyl-CoA donors, such as myristoyl-CoA (C14) and palmitoyl-CoA (C16) that are not efficient. This chain is Membrane-bound ghrelin O-acyltransferase mboat4, found in Danio rerio (Zebrafish).